The chain runs to 232 residues: Enolase-phosphatase E1 (232 aa).

This sequence belongs to the HAD-like hydrolase superfamily. MasA/MtnC family. As to quaternary structure, monomer. Requires Mg(2+) as cofactor.

It carries out the reaction 5-methylsulfanyl-2,3-dioxopentyl phosphate + H2O = 1,2-dihydroxy-5-(methylsulfanyl)pent-1-en-3-one + phosphate. It functions in the pathway amino-acid biosynthesis; L-methionine biosynthesis via salvage pathway; L-methionine from S-methyl-5-thio-alpha-D-ribose 1-phosphate: step 3/6. The protein operates within amino-acid biosynthesis; L-methionine biosynthesis via salvage pathway; L-methionine from S-methyl-5-thio-alpha-D-ribose 1-phosphate: step 4/6. Its function is as follows. Bifunctional enzyme that catalyzes the enolization of 2,3-diketo-5-methylthiopentyl-1-phosphate (DK-MTP-1-P) into the intermediate 2-hydroxy-3-keto-5-methylthiopentenyl-1-phosphate (HK-MTPenyl-1-P), which is then dephosphorylated to form the acireductone 1,2-dihydroxy-3-keto-5-methylthiopentene (DHK-MTPene). This Xanthomonas campestris pv. campestris (strain 8004) protein is Enolase-phosphatase E1.